We begin with the raw amino-acid sequence, 65 residues long: Large ribosomal subunit protein bL35 (65 aa).

Residues 1-22 are disordered; sequence MPKIKTVRGAAKRFKKTGKGGF. Over residues 10–22 the composition is skewed to basic residues; it reads AAKRFKKTGKGGF.

The protein belongs to the bacterial ribosomal protein bL35 family.

The sequence is that of Large ribosomal subunit protein bL35 from Klebsiella pneumoniae (strain 342).